The sequence spans 145 residues: Endoribonuclease YbeY (145 aa).

The Zn(2+) site is built by His109, His113, and His119.

This sequence belongs to the endoribonuclease YbeY family. Zn(2+) serves as cofactor.

The protein localises to the cytoplasm. Single strand-specific metallo-endoribonuclease involved in late-stage 70S ribosome quality control and in maturation of the 3' terminus of the 16S rRNA. The polypeptide is Endoribonuclease YbeY (Ruthia magnifica subsp. Calyptogena magnifica).